The sequence spans 136 residues: ATP synthase epsilon chain 2 (136 aa).

The protein belongs to the ATPase epsilon chain family. As to quaternary structure, F-type ATPases have 2 components, CF(1) - the catalytic core - and CF(0) - the membrane proton channel. CF(1) has five subunits: alpha(3), beta(3), gamma(1), delta(1), epsilon(1). CF(0) has three main subunits: a, b and c.

It is found in the cell inner membrane. Functionally, produces ATP from ADP in the presence of a proton gradient across the membrane. The protein is ATP synthase epsilon chain 2 of Nitrobacter hamburgensis (strain DSM 10229 / NCIMB 13809 / X14).